A 242-amino-acid polypeptide reads, in one-letter code: Biosynthetic peptidoglycan transglycosylase (242 aa).

A helical membrane pass occupies residues Leu19–Val39.

This sequence belongs to the glycosyltransferase 51 family.

The protein localises to the cell inner membrane. It catalyses the reaction [GlcNAc-(1-&gt;4)-Mur2Ac(oyl-L-Ala-gamma-D-Glu-L-Lys-D-Ala-D-Ala)](n)-di-trans,octa-cis-undecaprenyl diphosphate + beta-D-GlcNAc-(1-&gt;4)-Mur2Ac(oyl-L-Ala-gamma-D-Glu-L-Lys-D-Ala-D-Ala)-di-trans,octa-cis-undecaprenyl diphosphate = [GlcNAc-(1-&gt;4)-Mur2Ac(oyl-L-Ala-gamma-D-Glu-L-Lys-D-Ala-D-Ala)](n+1)-di-trans,octa-cis-undecaprenyl diphosphate + di-trans,octa-cis-undecaprenyl diphosphate + H(+). It participates in cell wall biogenesis; peptidoglycan biosynthesis. Its function is as follows. Peptidoglycan polymerase that catalyzes glycan chain elongation from lipid-linked precursors. This Escherichia coli O127:H6 (strain E2348/69 / EPEC) protein is Biosynthetic peptidoglycan transglycosylase.